The chain runs to 432 residues: Interleukin-11 receptor subunit alpha-1 (432 aa).

The N-terminal stretch at 1–23 is a signal peptide; it reads MSSSCSGLTRVLVAVATALVSSS. The Extracellular portion of the chain corresponds to 24–372; it reads SPCPQAWGPP…DPLEQVAVLA (349 aa). The Ig-like C2-type domain maps to 27 to 110; sequence PQAWGPPGVQ…SGGMVTLKLG (84 aa). Cystine bridges form between C48/C94, C120/C130, and C170/C180. Fibronectin type-III domains lie at 112–219 and 220–317; these read PPAR…LRPD and PPQG…TPST. N127 carries an N-linked (GlcNAc...) asparagine glycan. Residues 151–170 are disordered; that stretch reads KTLPGAESQRESPSTGPWPC. The N-linked (GlcNAc...) asparagine glycan is linked to N194. The short motif at 304 to 308 is the WSXWS motif element; that stretch reads WSAWS. 2 disordered regions span residues 309-332 and 342-361; these read PEAWGTPSTGPLQDEIPDWSQGHG and EDSPAPARPSLQPDPRPLDH. The chain crosses the membrane as a helical span at residues 373-393; sequence SLGIFSCLGLAVGALALGLWL. Residues 394–432 are Cytoplasmic-facing; that stretch reads RLRRSGKDGPQKPGLLAPMIPVEKLPGIPNLQRTPENFS.

It belongs to the type I cytokine receptor family. Type 3 subfamily. On IL11 binding, forms a multimer complex with IL6ST/gp130. In terms of processing, a short soluble form is also released from the membrane by proteolysis. The sIL11RA is formed either by limited proteolysis of membrane-bound receptors, a process referred to as ectodomain shedding, or directly secreted from the cells after alternative mRNA splicing. mIL11RA is cleaved by the proteases ADAM10, ELANE and PRTN3. Widely expressed in all adult tissues and in embryos. Highest levels in kidney, skeletal muscle and embryo.

The protein resides in the membrane. It localises to the secreted. Functionally, receptor for interleukin-11. The receptor systems for IL6, LIF, OSM, CNTF, IL11 and CT1 can utilize IL6ST for initiating signal transmission. The IL11/IL11RA/IL6ST complex may be involved in the control of proliferation and/or differentiation of skeletogenic progenitor or other mesenchymal cells. Essential for the normal development of craniofacial bones and teeth. Its function is as follows. Soluble form of IL11 receptor (sIL11RA) that acts as an agonist of IL11 activity. The IL11:sIL11RA complex binds to IL6ST/gp130 on cell surfaces and induces signaling also on cells that do not express membrane-bound IL11RA in a process called IL11 trans-signaling. In Mus musculus (Mouse), this protein is Interleukin-11 receptor subunit alpha-1.